A 573-amino-acid polypeptide reads, in one-letter code: MISNFILFALFIVTIALITKPLGSYIFRVFNNERTYLDWLAKPFQRVYLLVLGESSKKEQTAKAYFFSLVSFSVMAFIFVLVILLLQGILPLNPQEIKGMSFPQALNTAVSFITNTNWQSYSGETGVSYFAQMLALAVQNFVSAAVGLCVAIALIRSVARHETATIGNFWNDLGKGVFWILLPISIVIAIVYIFQGVPQNVMAYLHVHTLAGTEQIIPQGPIASQEAIKSLGTNGGGFFNANSAHPYENPTVITNYIQMVSIFAIAAALTYTFGKWVGNTKQGWLIFGVMLVLFIISLVVMTISELHGLDFLHSKDIQDIYGQVGHLSNMEGKESRFGVFYSTLYNTVSTSASDGGVNSVLDSYSPLAGMMAMLNMAIGEVIFGGVGAGFYGFFMFLMLAVFIGSLMIGRAPSFLGKRIEANDMKWTMFALLISLCCVLVFTGLAAVIPSVHQTLTNSGAHGFSEILYAYISGANNNGSAFAGLSANTNYLNITIALSMLIGRFGVIFAVIMLAGSLVKKKRSLQMSEISSLDTTSFIFAILVFFTILLIGGLTIFPALGLGPILDQLNLNFL.

A run of 10 helical transmembrane segments spans residues 6-26 (ILFA…GSYI), 66-86 (FFSL…ILLL), 135-155 (ALAV…IALI), 177-197 (VFWI…FQGV), 257-277 (IQMV…GKWV), 283-303 (GWLI…VMTI), 382-402 (IFGG…LAVF), 428-448 (MFAL…AAVI), 493-513 (ITIA…VIML), and 537-557 (FIFA…TIFP).

This sequence belongs to the KdpA family. As to quaternary structure, the system is composed of three essential subunits: KdpA, KdpB and KdpC.

The protein resides in the cell inner membrane. In terms of biological role, part of the high-affinity ATP-driven potassium transport (or Kdp) system, which catalyzes the hydrolysis of ATP coupled with the electrogenic transport of potassium into the cytoplasm. This subunit binds the periplasmic potassium ions and delivers the ions to the membrane domain of KdpB through an intramembrane tunnel. The chain is Potassium-transporting ATPase potassium-binding subunit from Francisella tularensis subsp. tularensis (strain WY96-3418).